A 36-amino-acid polypeptide reads, in one-letter code: Cytochrome b6-f complex subunit 5 (36 aa).

A helical transmembrane segment spans residues L5–A25.

It belongs to the PetG family. The 4 large subunits of the cytochrome b6-f complex are cytochrome b6, subunit IV (17 kDa polypeptide, PetD), cytochrome f and the Rieske protein, while the 4 small subunits are PetG, PetL, PetM and PetN. The complex functions as a dimer.

The protein resides in the cellular thylakoid membrane. Its function is as follows. Component of the cytochrome b6-f complex, which mediates electron transfer between photosystem II (PSII) and photosystem I (PSI), cyclic electron flow around PSI, and state transitions. PetG is required for either the stability or assembly of the cytochrome b6-f complex. The chain is Cytochrome b6-f complex subunit 5 from Acaryochloris marina (strain MBIC 11017).